A 270-amino-acid chain; its full sequence is uncharacterized protein (270 aa).

The N-terminal stretch at 1–22 (MGYIKRMALYMSVFLLIIFIVG) is a signal peptide. C23 carries the N-palmitoyl cysteine lipid modification. The S-diacylglycerol cysteine moiety is linked to residue C23.

This sequence belongs to the staphylococcal tandem lipoprotein family.

It localises to the cell membrane. This is an uncharacterized protein from Staphylococcus aureus (strain COL).